The primary structure comprises 75 residues: UPF0352 protein VP2129 (75 aa).

This sequence belongs to the UPF0352 family.

The chain is UPF0352 protein VP2129 from Vibrio parahaemolyticus serotype O3:K6 (strain RIMD 2210633).